A 491-amino-acid polypeptide reads, in one-letter code: Glycylpeptide N-tetradecanoyltransferase (491 aa).

Position 45–48 (45–48) interacts with tetradecanoyl-CoA; the sequence is HKFW. A disordered region spans residues 53 to 79; that stretch reads VPQITGSGASAPMEEGPIDDPKTPADV. Residues 182–184 and 190–194 contribute to the tetradecanoyl-CoA site; these read LCV and SKRLA. Catalysis depends on Leu491, which acts as the Proton acceptor; via carboxylate.

Belongs to the NMT family. In terms of assembly, monomer.

The protein localises to the cytoplasm. It carries out the reaction N-terminal glycyl-[protein] + tetradecanoyl-CoA = N-tetradecanoylglycyl-[protein] + CoA + H(+). Adds a myristoyl group to the N-terminal glycine residue of certain cellular proteins. The protein is Glycylpeptide N-tetradecanoyltransferase of Cryptococcus neoformans (Filobasidiella neoformans).